The primary structure comprises 189 residues: uncharacterized protein (189 aa).

The protein belongs to the OsmC/Ohr family.

This is an uncharacterized protein from Methanocaldococcus jannaschii (strain ATCC 43067 / DSM 2661 / JAL-1 / JCM 10045 / NBRC 100440) (Methanococcus jannaschii).